The chain runs to 260 residues: Cytochrome c oxidase subunit 3 (260 aa).

The Mitochondrial matrix portion of the chain corresponds to 1–15; sequence MTHQTHAYHMVNPSP. A helical membrane pass occupies residues 16–34; it reads WPLTGALSALLMTSGLAMW. At 35–40 the chain is on the mitochondrial intermembrane side; it reads FHFNST. The helical transmembrane segment at 41-66 threads the bilayer; that stretch reads ALLMIGLTTNMLTMYQWWRDIIREST. Over 67–72 the chain is Mitochondrial matrix; it reads FQGHHT. A helical transmembrane segment spans residues 73–105; the sequence is PAVQKGLRYGMILFIISEVLFFTGFFWAFYHSS. The Mitochondrial intermembrane portion of the chain corresponds to 106-128; the sequence is LAPTPELGGCWPPTGIHPLNPLE. The chain crosses the membrane as a helical span at residues 129 to 152; that stretch reads VPLLNTSVLLASGVSITWAHHSLM. At 153-155 the chain is on the mitochondrial matrix side; the sequence is EGD. Residues 156-183 traverse the membrane as a helical segment; that stretch reads RNHMLQALFITITLGVYFTLLQASEYYE. The Mitochondrial intermembrane portion of the chain corresponds to 184–190; sequence APFTISD. A helical transmembrane segment spans residues 191-223; that stretch reads GVYGSTFFVATGFHGLHVIIGSTFLIVCFFRQL. Residues 224–232 are Mitochondrial matrix-facing; that stretch reads KFHFTSNHH. A helical transmembrane segment spans residues 233 to 256; it reads FGFEAAAWYWHFVDVVWLFLYVSI. Residues 257–260 are Mitochondrial intermembrane-facing; that stretch reads YWWG.

This sequence belongs to the cytochrome c oxidase subunit 3 family. Component of the cytochrome c oxidase (complex IV, CIV), a multisubunit enzyme composed of 14 subunits. The complex is composed of a catalytic core of 3 subunits MT-CO1, MT-CO2 and MT-CO3, encoded in the mitochondrial DNA, and 11 supernumerary subunits COX4I, COX5A, COX5B, COX6A, COX6B, COX6C, COX7A, COX7B, COX7C, COX8 and NDUFA4, which are encoded in the nuclear genome. The complex exists as a monomer or a dimer and forms supercomplexes (SCs) in the inner mitochondrial membrane with NADH-ubiquinone oxidoreductase (complex I, CI) and ubiquinol-cytochrome c oxidoreductase (cytochrome b-c1 complex, complex III, CIII), resulting in different assemblies (supercomplex SCI(1)III(2)IV(1) and megacomplex MCI(2)III(2)IV(2)).

The protein resides in the mitochondrion inner membrane. It carries out the reaction 4 Fe(II)-[cytochrome c] + O2 + 8 H(+)(in) = 4 Fe(III)-[cytochrome c] + 2 H2O + 4 H(+)(out). Functionally, component of the cytochrome c oxidase, the last enzyme in the mitochondrial electron transport chain which drives oxidative phosphorylation. The respiratory chain contains 3 multisubunit complexes succinate dehydrogenase (complex II, CII), ubiquinol-cytochrome c oxidoreductase (cytochrome b-c1 complex, complex III, CIII) and cytochrome c oxidase (complex IV, CIV), that cooperate to transfer electrons derived from NADH and succinate to molecular oxygen, creating an electrochemical gradient over the inner membrane that drives transmembrane transport and the ATP synthase. Cytochrome c oxidase is the component of the respiratory chain that catalyzes the reduction of oxygen to water. Electrons originating from reduced cytochrome c in the intermembrane space (IMS) are transferred via the dinuclear copper A center (CU(A)) of subunit 2 and heme A of subunit 1 to the active site in subunit 1, a binuclear center (BNC) formed by heme A3 and copper B (CU(B)). The BNC reduces molecular oxygen to 2 water molecules using 4 electrons from cytochrome c in the IMS and 4 protons from the mitochondrial matrix. This chain is Cytochrome c oxidase subunit 3 (MT-CO3), found in Bos mutus grunniens (Wild yak).